The sequence spans 86 residues: Insulin (86 aa).

3 disulfide bridges follow: cysteine 7–cysteine 72, cysteine 19–cysteine 85, and cysteine 71–cysteine 76. Residues 33-63 constitute a propeptide, c peptide; it reads ELEDPQVGQADPGVVPEAGRLQPLALEMTLQ.

The protein belongs to the insulin family. In terms of assembly, heterodimer of a B chain and an A chain linked by two disulfide bonds.

It localises to the secreted. Insulin decreases blood glucose concentration. It increases cell permeability to monosaccharides, amino acids and fatty acids. It accelerates glycolysis, the pentose phosphate cycle, and glycogen synthesis in liver. The polypeptide is Insulin (INS) (Chinchilla chinchilla (Short-tailed chinchilla)).